The following is a 408-amino-acid chain: GTPase Obg (408 aa).

The region spanning 1 to 159 (MKFFDEARIE…RNLHLELKVL (159 aa)) is the Obg domain. The 175-residue stretch at 160–334 (ADVGLLGMPN…LIFALQDFLD (175 aa)) folds into the OBG-type G domain. Residues 166–173 (GMPNAGKS), 191–195 (FTTLQ), 213–216 (DIPG), 284–287 (NKLD), and 315–317 (SAL) each bind GTP. S173 and T193 together coordinate Mg(2+). The disordered stretch occupies residues 385-408 (AEDALAEDALDDDADGEDADPNAR).

Belongs to the TRAFAC class OBG-HflX-like GTPase superfamily. OBG GTPase family. Monomer. Requires Mg(2+) as cofactor.

It is found in the cytoplasm. An essential GTPase which binds GTP, GDP and possibly (p)ppGpp with moderate affinity, with high nucleotide exchange rates and a fairly low GTP hydrolysis rate. Plays a role in control of the cell cycle, stress response, ribosome biogenesis and in those bacteria that undergo differentiation, in morphogenesis control. The protein is GTPase Obg of Azoarcus sp. (strain BH72).